A 248-amino-acid chain; its full sequence is 1-(5-phosphoribosyl)-5-[(5-phosphoribosylamino)methylideneamino] imidazole-4-carboxamide isomerase (248 aa).

Asp-11 acts as the Proton acceptor in catalysis. Asp-132 serves as the catalytic Proton donor.

The protein belongs to the HisA/HisF family.

The protein localises to the cytoplasm. It catalyses the reaction 1-(5-phospho-beta-D-ribosyl)-5-[(5-phospho-beta-D-ribosylamino)methylideneamino]imidazole-4-carboxamide = 5-[(5-phospho-1-deoxy-D-ribulos-1-ylimino)methylamino]-1-(5-phospho-beta-D-ribosyl)imidazole-4-carboxamide. The protein operates within amino-acid biosynthesis; L-histidine biosynthesis; L-histidine from 5-phospho-alpha-D-ribose 1-diphosphate: step 4/9. The chain is 1-(5-phosphoribosyl)-5-[(5-phosphoribosylamino)methylideneamino] imidazole-4-carboxamide isomerase from Afipia carboxidovorans (strain ATCC 49405 / DSM 1227 / KCTC 32145 / OM5) (Oligotropha carboxidovorans).